Consider the following 220-residue polypeptide: Casparian strip membrane protein 4 (220 aa).

The disordered stretch occupies residues 1–39 (MDSRREVEESSTAPILESKRTRSNGKGKSIDGDHSPPHA). Topologically, residues 1-60 (MDSRREVEESSTAPILESKRTRSNGKGKSIDGDHSPPHAATVVTTKATPLQKGGMKKGIA) are cytoplasmic. Residues 61–81 (ILDFILRLGAIGAALGAAVIM) form a helical membrane-spanning segment. The Extracellular segment spans residues 82 to 108 (GTNEQILPFFTQFLQFHAQWDDFPMFK). The helical transmembrane segment at 109-129 (FFVVANGAAAGFLILSLPFSI) threads the bilayer. The Cytoplasmic portion of the chain corresponds to 130 to 141 (VCIVRPLAAGPR). Residues 142–162 (FLLVIVDLVLMALVVAAASSA) form a helical membrane-spanning segment. At 163-194 (AAVVYLAHNGSQDANWNAICQQFTDFCQGSSL) the chain is on the extracellular side. N-linked (GlcNAc...) asparagine glycosylation is present at Asn171. The helical transmembrane segment at 195 to 215 (AVVASFVASVFLACLVVVSSV) threads the bilayer. Residues 216–220 (ALKRT) are Cytoplasmic-facing.

Belongs to the Casparian strip membrane proteins (CASP) family. In terms of assembly, homodimer and heterodimers.

Its subcellular location is the cell membrane. Functionally, regulates membrane-cell wall junctions and localized cell wall deposition. Required for establishment of the Casparian strip membrane domain (CSD) and the subsequent formation of Casparian strips, a cell wall modification of the root endodermis that determines an apoplastic barrier between the intraorganismal apoplasm and the extraorganismal apoplasm and prevents lateral diffusion. This Medicago truncatula (Barrel medic) protein is Casparian strip membrane protein 4.